Here is a 404-residue protein sequence, read N- to C-terminus: Cysteine desulfurase IscS (404 aa).

Residues 75 to 76, asparagine 155, glutamine 183, and 203 to 205 contribute to the pyridoxal 5'-phosphate site; these read AT and SAH. Position 206 is an N6-(pyridoxal phosphate)lysine (lysine 206). Threonine 243 contributes to the pyridoxal 5'-phosphate binding site. Cysteine 328 serves as the catalytic Cysteine persulfide intermediate. Cysteine 328 contacts [2Fe-2S] cluster.

The protein belongs to the class-V pyridoxal-phosphate-dependent aminotransferase family. NifS/IscS subfamily. In terms of assembly, homodimer. Forms a heterotetramer with IscU, interacts with other sulfur acceptors. Requires pyridoxal 5'-phosphate as cofactor.

Its subcellular location is the cytoplasm. It catalyses the reaction (sulfur carrier)-H + L-cysteine = (sulfur carrier)-SH + L-alanine. Its pathway is cofactor biosynthesis; iron-sulfur cluster biosynthesis. Functionally, master enzyme that delivers sulfur to a number of partners involved in Fe-S cluster assembly, tRNA modification or cofactor biosynthesis. Catalyzes the removal of elemental sulfur atoms from cysteine to produce alanine. Functions as a sulfur delivery protein for Fe-S cluster synthesis onto IscU, an Fe-S scaffold assembly protein, as well as other S acceptor proteins. This chain is Cysteine desulfurase IscS, found in Aeromonas hydrophila subsp. hydrophila (strain ATCC 7966 / DSM 30187 / BCRC 13018 / CCUG 14551 / JCM 1027 / KCTC 2358 / NCIMB 9240 / NCTC 8049).